Reading from the N-terminus, the 497-residue chain is Cobyric acid synthase (497 aa).

The region spanning 257 to 431 (WLRVAAVRLP…WHGLLDNDDF (175 aa)) is the GATase cobBQ-type domain. The active-site Nucleophile is C338. H423 is an active-site residue.

Belongs to the CobB/CobQ family. CobQ subfamily.

The protein operates within cofactor biosynthesis; adenosylcobalamin biosynthesis. Its function is as follows. Catalyzes amidations at positions B, D, E, and G on adenosylcobyrinic A,C-diamide. NH(2) groups are provided by glutamine, and one molecule of ATP is hydrogenolyzed for each amidation. This chain is Cobyric acid synthase, found in Mycolicibacterium paratuberculosis (strain ATCC BAA-968 / K-10) (Mycobacterium paratuberculosis).